The sequence spans 142 residues: Large ribosomal subunit protein uL11 (142 aa).

Belongs to the universal ribosomal protein uL11 family. As to quaternary structure, part of the ribosomal stalk of the 50S ribosomal subunit. Interacts with L10 and the large rRNA to form the base of the stalk. L10 forms an elongated spine to which L12 dimers bind in a sequential fashion forming a multimeric L10(L12)X complex. In terms of processing, one or more lysine residues are methylated.

Its function is as follows. Forms part of the ribosomal stalk which helps the ribosome interact with GTP-bound translation factors. This is Large ribosomal subunit protein uL11 from Thermobifida fusca (strain YX).